A 337-amino-acid chain; its full sequence is UPF0252 protein PH1321 (337 aa).

Residues 100-120 traverse the membrane as a helical segment; it reads IIGMLFLVFIILPAITSNLWS.

It belongs to the UPF0252 family.

The protein resides in the membrane. The protein is UPF0252 protein PH1321 of Pyrococcus horikoshii (strain ATCC 700860 / DSM 12428 / JCM 9974 / NBRC 100139 / OT-3).